A 101-amino-acid chain; its full sequence is Trp operon repressor homolog (101 aa).

Residues 59–82 mediate DNA binding; that stretch reads QREIQQNLSTSAATITRGSNMLKM.

It belongs to the TrpR family. As to quaternary structure, homodimer.

It localises to the cytoplasm. This protein is an aporepressor. When complexed with L-tryptophan it binds the operator region of the trp operon and prevents the initiation of transcription. This is Trp operon repressor homolog from Actinobacillus succinogenes (strain ATCC 55618 / DSM 22257 / CCUG 43843 / 130Z).